Consider the following 700-residue polypeptide: MAKITKTFQYGKHTVTLETGEVARQASGAVIVKMDDTVLLVTVVAAKTAREGQDFFPLTVDYQEKFYAGGRIPGSFFKREGRATEKETLISRLIDRPIRPLFPEDYKNEVQIIAMVMSLDPEIDGDIPAMIGASAALSLAGIPFKGPIGAAKVGYNDGQYILNPTVSELKKSQLELVVAGTANAVLMVESEAALLSEEVMLGAVIFGHREMQKVIQVIDSLTAEAGTEPSDWVPPAKNDALVIALKEVIGGRLSDAFHIREKLQRRDAIAAVKDDVIQQLAGRLEVEGWNLAELLKEFGELEYRTMRDALLDTKVRIDGRSLEAVRPITVKVGVLPRVHGSGLFTRGETQAIVVTTLGTARDGQVIDAVTGEYKENFLFHYNFPPYSVGECGRFGVQKRREIGHGRLARRGVLAVMPSLDEFPYTIRVVSEITESNGSSSMASVCGSSLALMDAGVPVKAPVAGIAMGLVKEGERFVVLSDILGDEDHLGDMDFKVAGTSEGVSALQMDIKIEGITEEIMRQALQQAKVGRLHILGEMDKALAAPRAELSDYAPRLLTIKIHPDKIRDVIGKGGSTIQAITKDTGTQIDIQDDGTIVIASVNNAAAREAKRRIEQITSDVEPGRIYEGKVAKIMDFGAFVTILPGKDGLVHVSQISSERVERVGDKLKEGDVVRVKVLEVDKQGRIRLSIKAVEEEVASI.

Mg(2+) is bound by residues Asp-487 and Asp-493. Residues Pro-554–Ile-613 enclose the KH domain. In terms of domain architecture, S1 motif spans Gly-623–Lys-691.

Belongs to the polyribonucleotide nucleotidyltransferase family. As to quaternary structure, component of the RNA degradosome, which is a multiprotein complex involved in RNA processing and mRNA degradation. It depends on Mg(2+) as a cofactor.

It is found in the cytoplasm. The catalysed reaction is RNA(n+1) + phosphate = RNA(n) + a ribonucleoside 5'-diphosphate. Its function is as follows. Involved in mRNA degradation. Catalyzes the phosphorolysis of single-stranded polyribonucleotides processively in the 3'- to 5'-direction. The chain is Polyribonucleotide nucleotidyltransferase from Xylella fastidiosa (strain M12).